A 637-amino-acid chain; its full sequence is Extracellular metalloproteinase MEP (637 aa).

Residues 1 to 21 (MRSVDSLLLLGLTGLASQANA) form the signal peptide. Residues 22–246 (HPAKRQPNDS…VVGVVDYVAD (225 aa)) constitute a propeptide that is removed on maturation. N-linked (GlcNAc...) asparagine glycosylation occurs at asparagine 288. Histidine 431 serves as a coordination point for Zn(2+). Glutamate 432 is an active-site residue. Histidine 435 provides a ligand contact to Zn(2+).

Belongs to the peptidase M36 family. Zn(2+) serves as cofactor.

Its subcellular location is the secreted. In terms of biological role, secreted metalloproteinase that probably acts as a virulence factor. Cleaves Z.mays Endochitinase A (CHIA) between residues 'Gly-29' and 'Cys-30'. This is Extracellular metalloproteinase MEP (MEP) from Fusarium vanettenii (strain ATCC MYA-4622 / CBS 123669 / FGSC 9596 / NRRL 45880 / 77-13-4) (Fusarium solani subsp. pisi).